Consider the following 263-residue polypeptide: 3-methyl-2-oxobutanoate hydroxymethyltransferase (263 aa).

Mg(2+) contacts are provided by aspartate 44 and aspartate 83. 3-methyl-2-oxobutanoate-binding positions include 44–45, aspartate 83, and lysine 112; that span reads DS. Glutamate 114 contacts Mg(2+). Glutamate 181 functions as the Proton acceptor in the catalytic mechanism.

This sequence belongs to the PanB family. In terms of assembly, homodecamer; pentamer of dimers. The cofactor is Mg(2+).

The protein resides in the cytoplasm. It carries out the reaction 3-methyl-2-oxobutanoate + (6R)-5,10-methylene-5,6,7,8-tetrahydrofolate + H2O = 2-dehydropantoate + (6S)-5,6,7,8-tetrahydrofolate. The protein operates within cofactor biosynthesis; (R)-pantothenate biosynthesis; (R)-pantoate from 3-methyl-2-oxobutanoate: step 1/2. Its function is as follows. Catalyzes the reversible reaction in which hydroxymethyl group from 5,10-methylenetetrahydrofolate is transferred onto alpha-ketoisovalerate to form ketopantoate. In Sulfurimonas denitrificans (strain ATCC 33889 / DSM 1251) (Thiomicrospira denitrificans (strain ATCC 33889 / DSM 1251)), this protein is 3-methyl-2-oxobutanoate hydroxymethyltransferase.